Consider the following 213-residue polypeptide: MDSDKILNAVKEARTLAKPRNFTQSVDLIVNLKELDLTRPENRLKEQIVLPSGRGKDVAIAVIAKGDLAAQAEDMGLTVIRQEELEELGKNKKTAKKIANAHGFFIAQADMMPLVGKSLGPVLGPRGKMPQPVPANANLAPLVARFQKTVAINTRDKSLFQVYIGHESMSDEELAANAEAILNVVSKKYEKGLYHVKSAFTKLTMGAAAPIEK.

It belongs to the universal ribosomal protein uL1 family. In terms of assembly, part of the 50S ribosomal subunit.

Binds directly to 23S rRNA. Probably involved in E site tRNA release. In terms of biological role, protein L1 is also a translational repressor protein, it controls the translation of its operon by binding to its mRNA. The protein is Large ribosomal subunit protein uL1 of Methanococcus maripaludis (strain C6 / ATCC BAA-1332).